An 86-amino-acid polypeptide reads, in one-letter code: Photosystem I reaction center subunit PsaK (86 aa).

Residues 15 to 34 (PWSTQVAMVMITCNLLAIVA) traverse the membrane as a helical segment.

It belongs to the PsaG/PsaK family.

The protein localises to the plastid. It localises to the chloroplast thylakoid membrane. This Pyropia yezoensis (Susabi-nori) protein is Photosystem I reaction center subunit PsaK.